Consider the following 233-residue polypeptide: Transcriptional regulatory protein WalR (233 aa).

In terms of domain architecture, Response regulatory spans 4 to 117 (KVVVVDDEKP…ELIARVKANL (114 aa)). Residue Asp53 is modified to 4-aspartylphosphate. Positions 132-231 (TNEITIKDIV…RRGVGYFLQQ (100 aa)) form a DNA-binding region, ompR/PhoB-type.

In terms of processing, phosphorylated by WalK.

Its subcellular location is the cytoplasm. Its function is as follows. Member of the two-component regulatory system WalK/WalR. This is Transcriptional regulatory protein WalR (walR) from Staphylococcus haemolyticus (strain JCSC1435).